Here is a 219-residue protein sequence, read N- to C-terminus: Protein-L-isoaspartate O-methyltransferase (219 aa).

Ser67 is a catalytic residue.

The protein belongs to the methyltransferase superfamily. L-isoaspartyl/D-aspartyl protein methyltransferase family.

The protein localises to the cytoplasm. It carries out the reaction [protein]-L-isoaspartate + S-adenosyl-L-methionine = [protein]-L-isoaspartate alpha-methyl ester + S-adenosyl-L-homocysteine. Functionally, catalyzes the methyl esterification of L-isoaspartyl residues in peptides and proteins that result from spontaneous decomposition of normal L-aspartyl and L-asparaginyl residues. It plays a role in the repair and/or degradation of damaged proteins. In Cereibacter sphaeroides (strain ATCC 17029 / ATH 2.4.9) (Rhodobacter sphaeroides), this protein is Protein-L-isoaspartate O-methyltransferase.